A 1774-amino-acid chain; its full sequence is MSSLKEQLAQVAASNATVALDRKRRQKLHSASLIYNPKTAATQDYDFIFDNATSALEELVEIDVRFKVFSRSLFSASSVNIDRNTQTKEQVRTLDQAVNAYLMLASAWWHLTPTLHATEWLVRRFQIHVHNAEMLLLSTLNYYQSPVFKRILNIVKLPPLFSSLANFAKAESVPSNLTIVKLFNDMDFLTLYTSYVGKVVKQKVTYTNQLLFNSCAFINLVAFNSNSEEKLERLVPILLEVCAKLLASPSDDCQMAAHTVLVVLVTALPLKKQILLAATETILANLADSASTKRCAFVTVCKLFQTLKGHGNVDQLPANIYTLFDSKISNDCLIDFLSKKETPADKFVTSYVRSIARYDHGKLNSIVSILKQVKLEKFEVRLIITDLIHLSELLEDKSQLIQLFEFFISIDEDMVLRCLHSLNLTGELFEIRLTTSLFSAERIEPVNGEDVVKGLEASKVAGLAGGAQPFTEFLNKNSAYICTKNISLLVEDDEQASKLLSLFVESVGKKYQPGLFLSSFFTTLESRITFLLRIIVSPGAPVALRLISVSNLSKLIHTIGNDTNVFTLVPVLIVALTDISKNVRAAVKKVLHQISKRPFTKRYFLNDKIYGEGQSVPMLNPKESESWLKTFLDGYLVENYDISQLLIPKKNEKMYLLFWANQALYMPLPQPKLVLMRFLARHESFSSTYSQLWENFLSSYLEQRPQWELKCSKNKTNFCEFESVLVLLLSKKEKNPAAIEFLLGALKSPFEQLASIMAKRLIEIYPTLKQPVQCQIVQDIIESTASADLSYDSIETLQSLALSADVVVSVIKQNMINVDETSNIIKKRRRRSSASNKAALQKEEVSRIAEIHLRKLTILLEALDKIKVQGSEALLTSLFDILADLDTLDNDGGLPVLYAQETLASCMLHTIDSLRATGATPKLRSVRTDILVAAIRASSSPQVQNKLLLVISALALLNPELVLHSIMPIFTFMGAHSLRQDDEFSTMVVEKTVKTVVPALLESGSSSMTDEIEFLLMSFSTAFSHVPKHRRVRLFTTLIKTLQPSSSIAPFLFLLSQQFSAKVENFEIAESKSILEFSRSFMSKFAVLDQLTGIAGLFELVKLLSEPDLKDKTSPRTLLSNGILNYTPSEMFNYKRNTFDFMDKILAEDNQGGNKGENNLKLKLLSALLDPQTEEQVKSDVKDQFAKVLQHNLVFINNVEELCSTQDLTEQGKSDGDESGSEPDNDNPVADMTEILFSLLGHILDLLPISTFVESILPLLGKDTEDIIRKHLTLVIGTKFESEPNSSATYANMTASSLLAIVTDEAEAPGVVQAALNTTSTLVSKFGDRLDASTLTECLKIGVQKLNSSSTDIVVSALAVLTNTVHVLGVKSIGFYAKIVPRALAIFDSVQDTKSDLRKEVQLSVVLLFAAMMKRIPSFLQSNLKDVMRAIFFADEVQNSISLYVISLLVQQLDLKEVLKTLYRIWTTDISKTGNSVAVSLFLTTLESTVEAIDKKSATSQSPTFFKLLLAMFEYRSVSTFDNNTISRIEASVHQIANIYVLKLNDKIFRPLFALTVRWAFDGESVSNLQITKVERLTAFFKFFNKLQESLKSIITSYFTYLLEPTNALLNDFHSGAVSDTNLRRLTLTALTASFKYDRDEYWKSTARFELLAESLVNQLANIEDSIGKYLVKAIAALASNNAGVDEHSKLLHRALVEHMKASCATSQKLWAVKATKLIYAKVGEHWLVLLPQLVPVIAELLEDDDEEVEQEVRTGLVKVVETVLGEPFDRYLT.

A disordered region spans residues threonine 1209–proline 1228. Residues leucine 1734–tyrosine 1772 form an HEAT repeat.

It belongs to the HEATR1/UTP10 family. Component of the ribosomal small subunit (SSU) processome.

It localises to the nucleus. The protein localises to the nucleolus. Functionally, involved in nucleolar processing of pre-18S ribosomal RNA. Involved in ribosome biosynthesis. The polypeptide is U3 small nucleolar RNA-associated protein 10 (Eremothecium gossypii (strain ATCC 10895 / CBS 109.51 / FGSC 9923 / NRRL Y-1056) (Yeast)).